A 686-amino-acid chain; its full sequence is DNA ligase 1 (686 aa).

NAD(+) contacts are provided by residues 35-39 (DFEYD), 84-85 (SL), and Glu-119. Catalysis depends on Lys-121, which acts as the N6-AMP-lysine intermediate. 4 residues coordinate NAD(+): Arg-142, Glu-177, Lys-293, and Lys-317. Residues Cys-411, Cys-414, Cys-429, and Cys-434 each coordinate Zn(2+). In terms of domain architecture, BRCT spans 602–686 (RVGEQLAGLT…LAEKGAPPLP (85 aa)).

Belongs to the NAD-dependent DNA ligase family. LigA subfamily. The cofactor is Mg(2+). Requires Mn(2+) as cofactor.

The catalysed reaction is NAD(+) + (deoxyribonucleotide)n-3'-hydroxyl + 5'-phospho-(deoxyribonucleotide)m = (deoxyribonucleotide)n+m + AMP + beta-nicotinamide D-nucleotide.. Functionally, DNA ligase that catalyzes the formation of phosphodiester linkages between 5'-phosphoryl and 3'-hydroxyl groups in double-stranded DNA using NAD as a coenzyme and as the energy source for the reaction. It is essential for DNA replication and repair of damaged DNA. The polypeptide is DNA ligase 1 (Deinococcus deserti (strain DSM 17065 / CIP 109153 / LMG 22923 / VCD115)).